Reading from the N-terminus, the 133-residue chain is Lymphocyte antigen 6 complex locus protein G6d (133 aa).

The N-terminal stretch at 1–19 (MKPQFVGILLSSLLGAALG) is a signal peptide. Positions 22-116 (MRCYNCGGSP…ASHVAPAGIL (95 aa)) constitute a UPAR/Ly6 domain. C27 and C35 are disulfide-bonded. Residues T40 and T41 are each glycosylated (O-linked (GalNAc...) threonine). Intrachain disulfides connect C42/C71 and C77/C96. A lipid anchor (GPI-anchor amidated serine) is attached at S104. The propeptide at 105–133 (AVASHVAPAGILAAAATALTCLLPGLWSG) is removed in mature form.

In terms of assembly, homodimer. O-glycosylated. Expressed in the adult lung, and in fetal liver, lung, kidney, brain and spleen.

It localises to the cell membrane. The protein localises to the cell projection. Its subcellular location is the filopodium. The sequence is that of Lymphocyte antigen 6 complex locus protein G6d (LY6G6D) from Homo sapiens (Human).